Reading from the N-terminus, the 171-residue chain is NADH-quinone oxidoreductase subunit C (171 aa).

It belongs to the complex I 30 kDa subunit family. As to quaternary structure, NDH-1 is composed of 14 different subunits. Subunits NuoB, C, D, E, F, and G constitute the peripheral sector of the complex.

The protein localises to the cell membrane. The enzyme catalyses a quinone + NADH + 5 H(+)(in) = a quinol + NAD(+) + 4 H(+)(out). NDH-1 shuttles electrons from NADH, via FMN and iron-sulfur (Fe-S) centers, to quinones in the respiratory chain. The immediate electron acceptor for the enzyme in this species is believed to be ubiquinone. Couples the redox reaction to proton translocation (for every two electrons transferred, four hydrogen ions are translocated across the cytoplasmic membrane), and thus conserves the redox energy in a proton gradient. The sequence is that of NADH-quinone oxidoreductase subunit C from Herpetosiphon aurantiacus (strain ATCC 23779 / DSM 785 / 114-95).